Reading from the N-terminus, the 109-residue chain is MSGVNNTSANDLSTTESNSNSAVGAPSVKTEHGDSKDSLNLDATEAPIDLPQKPLSAYTTVAILCLMIAFGGFIFGWDTGTISGFVNLSDFIRRFGQKKTTRGLTTYRK.

The segment covering 1–22 (MSGVNNTSANDLSTTESNSNSA) has biased composition (polar residues). Positions 1–40 (MSGVNNTSANDLSTTESNSNSAVGAPSVKTEHGDSKDSLN) are disordered. Residues 1-56 (MSGVNNTSANDLSTTESNSNSAVGAPSVKTEHGDSKDSLNLDATEAPIDLPQKPLS) lie on the Cytoplasmic side of the membrane. Residues 29–39 (KTEHGDSKDSL) are compositionally biased toward basic and acidic residues. The chain crosses the membrane as a helical span at residues 57 to 77 (AYTTVAILCLMIAFGGFIFGW). Topologically, residues 78–109 (DTGTISGFVNLSDFIRRFGQKKTTRGLTTYRK) are extracellular. N87 is a glycosylation site (N-linked (GlcNAc...) asparagine).

Belongs to the major facilitator superfamily. Sugar transporter (TC 2.A.1.1) family.

The protein resides in the cell membrane. Probable glucose transporter. In Saccharomyces cerevisiae (strain ATCC 204508 / S288c) (Baker's yeast), this protein is Putative transporter-like protein YIL171W.